The chain runs to 307 residues: MPEFPPPIDPSYVPSVSLTRIPANAPIEDILAVLERDGGLILTDIISSQDVAAINDELDPYVQKARAESHAAYDLIPKQTIMVPGIVGKSPTMAKIAEYEVIDKLRTMVLQKKCTATWEDRTEEFTIGPLLNSSLTYNVSYGGPRQRLHRDDMIHGIYHHDGEYSLSNETMLGFMFAGCKTTRENGATMAIPGSHKWNHTRVPRTDEVCFAEMEPGSAFVFLGTVYHGAGHNSVPDQVRKVYGLFFISGTLRPEENQFLAIPRSKVLGMSDKMLSLLGYKKPETWLGIVNNGDPAENLKEVLDMANS.

Positions 149, 151, and 227 each coordinate Fe cation.

The protein belongs to the PhyH family. In terms of assembly, homodimer. The cofactor is Fe cation.

It participates in mycotoxin biosynthesis. In terms of biological role, dioxygenase; part of the gene cluster that mediates the biosynthesis of swainsonine (SW), a cytotoxic fungal alkaloid and a potential cancer therapy drug. Swainsonine production occurs via a multibranched pathway and is dispensable for fungal colonization of plants and infection of insect hosts. The first step of swainsonine biosynthesis is the production of the precursor pipecolic acid (PA) via conversion of L-lysine (Lys) to 1-piperideine-6-carboxylate (P6C) by the aminotransferase swnA, the latter being further reduced to PA by the reductase swnR. The PKS-NRPS hybrid synthetase swnK uptakes and condensates PA and malonyl-CoA with and without skipping of the ketoreductase (KR) domain in order to produce 3 intermediates, 1-oxoindolizidine, (1S)-1-hydroxyindolizin, and (1R)-1-hydroxyindolizine; with the transisomer (1S)-1-hydroxyindolizin being predominant. The terminal thioester reductase (TE) domain of swnK is involved in reduction of the thioester bond to release the intermediate aldehydes. The oxidoreductase swnN could contribute to the reduction of 1-oxoindolizidine to (1S)-1-hydroxyindolizin and (1R)-1-hydroxyindolizine, contributing to the major route of SW production. The dioxygenase swnH2 would be responsible for the oxidization of (1R)-1-hydroxyindolizine into (1R,2S)-1,2-dihydroxyindolizine and of (1S)-1-hydroxyindolizin to yield both (1R,2S)-1,2-dihydroxyindolizine and (1S,2S)-1,2-dihydroxyindolizine. The dioxygenase swnH1 then performs the conversion of the 1,2-dihydroxyindolizine epimers to SW. The protein is Dioxygenase swnH1 of Arthroderma benhamiae (strain ATCC MYA-4681 / CBS 112371) (Trichophyton mentagrophytes).